A 286-amino-acid polypeptide reads, in one-letter code: Translocon-associated protein subunit alpha (286 aa).

A signal peptide spans 1-18 (MRLLPRLLLLLLLVFPAT). The Lumenal portion of the chain corresponds to 19–207 (VLFRGGPRGL…EREDGLDGET (189 aa)). Residues 39-75 (EETVEDSIIEDEDDEAEVEEDEPTDLVEDKEEEDVSG) are compositionally biased toward acidic residues. Positions 39–83 (EETVEDSIIEDEDDEAEVEEDEPTDLVEDKEEEDVSGEPEASPSA) are disordered. Residues N136 and N191 are each glycosylated (N-linked (GlcNAc...) asparagine). Residues 208-228 (IFMYMFLAGLGLLVIVGLHQL) traverse the membrane as a helical segment. Over 229 to 286 (LESRKRKRPIQKVEMGTSSQNDVDMSWIPQETLNQINKASPRRLPRKRAQKRSVGSDE) the chain is Cytoplasmic. Residue S247 is modified to Phosphoserine. Position 260 is a phosphothreonine (T260). The segment at 261-286 (LNQINKASPRRLPRKRAQKRSVGSDE) is disordered. S268 carries the post-translational modification Phosphoserine. The segment covering 268 to 279 (SPRRLPRKRAQK) has biased composition (basic residues).

Belongs to the TRAP-alpha family. In terms of assembly, heterotetramer of TRAP-alpha, TRAP-beta, TRAP-delta and TRAP-gamma. Interacts with palmitoylated calnexin (CALX), the interaction is required for efficient folding of glycosylated proteins.

The protein localises to the endoplasmic reticulum membrane. TRAP proteins are part of a complex whose function is to bind calcium to the ER membrane and thereby regulate the retention of ER resident proteins. May be involved in the recycling of the translocation apparatus after completion of the translocation process or may function as a membrane-bound chaperone facilitating folding of translocated proteins. In Homo sapiens (Human), this protein is Translocon-associated protein subunit alpha (SSR1).